The sequence spans 237 residues: Undecaprenyl-diphosphatase (237 aa).

A run of 7 helical transmembrane segments spans residues 38–58, 65–85, 92–112, 126–146, 166–186, 191–211, and 217–237; these read QTAVLHLGTLVSVVLFAFDGI, WRIILNLIVSTIPAGVFGVLF, LFSSPRFLPLFFSVTALILMF, MSFLDALLVGIAQLFALFPGI, ALQYSFLMSIPVVLGAGILGL, VTILAPIFAFLSGLFALYVLS, and GKIWQFSYYCLFVAILSYLVG.

The protein belongs to the UppP family.

Its subcellular location is the cell inner membrane. The enzyme catalyses di-trans,octa-cis-undecaprenyl diphosphate + H2O = di-trans,octa-cis-undecaprenyl phosphate + phosphate + H(+). Catalyzes the dephosphorylation of undecaprenyl diphosphate (UPP). Confers resistance to bacitracin. The polypeptide is Undecaprenyl-diphosphatase (Thermotoga sp. (strain RQ2)).